Here is a 257-residue protein sequence, read N- to C-terminus: Beta-fibrinogenase mucrofibrase-4 (257 aa).

Residues 1-18 (MVLIRVLANLLILQLSYA) form the signal peptide. Positions 19–24 (QKSSEL) are excised as a propeptide. Residues 25–248 (VIGGDECNIN…HLDWIKGFIA (224 aa)) form the Peptidase S1 domain. Intrachain disulfides connect C31–C162, C49–C65, C97–C255, C141–C209, C173–C188, and C199–C224. Catalysis depends on charge relay system residues H64 and D109. Catalysis depends on S203, which acts as the Charge relay system.

This sequence belongs to the peptidase S1 family. Snake venom subfamily. As to quaternary structure, monomer. In terms of tissue distribution, expressed by the venom gland.

It localises to the secreted. Its function is as follows. Snake venom serine protease with fibrinogenolytic activities. Cleaves beta-chain of fibrinogen (FGB) efficiently and shows relatively lower activity on alpha-chain. The chain is Beta-fibrinogenase mucrofibrase-4 from Protobothrops mucrosquamatus (Taiwan habu).